Reading from the N-terminus, the 212-residue chain is Redox-sensing transcriptional repressor Rex (212 aa).

The segment at residues 17 to 56 (LYARSLRYLLEEGVHSVSSQELGERINVTAAQIRKDLSYF) is a DNA-binding region (H-T-H motif). An NAD(+)-binding site is contributed by 91–96 (GIGLLG).

This sequence belongs to the transcriptional regulatory Rex family. In terms of assembly, homodimer.

The protein resides in the cytoplasm. In terms of biological role, modulates transcription in response to changes in cellular NADH/NAD(+) redox state. The sequence is that of Redox-sensing transcriptional repressor Rex from Chloroflexus aurantiacus (strain ATCC 29366 / DSM 635 / J-10-fl).